Consider the following 228-residue polypeptide: Octanoyltransferase (228 aa).

In terms of domain architecture, BPL/LPL catalytic spans 31–212; the sequence is GETDGILILL…KFSEVFGIHF (182 aa). Residues 76–83, 143–145, and 156–158 contribute to the substrate site; these read RGGKITFH, AIG, and GIA. The Acyl-thioester intermediate role is filled by Cys-174.

This sequence belongs to the LipB family.

It is found in the cytoplasm. The catalysed reaction is octanoyl-[ACP] + L-lysyl-[protein] = N(6)-octanoyl-L-lysyl-[protein] + holo-[ACP] + H(+). The protein operates within protein modification; protein lipoylation via endogenous pathway; protein N(6)-(lipoyl)lysine from octanoyl-[acyl-carrier-protein]: step 1/2. Catalyzes the transfer of endogenously produced octanoic acid from octanoyl-acyl-carrier-protein onto the lipoyl domains of lipoate-dependent enzymes. Lipoyl-ACP can also act as a substrate although octanoyl-ACP is likely to be the physiological substrate. The chain is Octanoyltransferase from Thermoanaerobacter pseudethanolicus (strain ATCC 33223 / 39E) (Clostridium thermohydrosulfuricum).